The primary structure comprises 413 residues: Divalent metal cation transporter MntH (413 aa).

Over M1–L19 the chain is Cytoplasmic. A helical transmembrane segment spans residues A20–A39. Residues T40–Q51 are Periplasmic-facing. A helical transmembrane segment spans residues L52 to A71. The Cytoplasmic portion of the chain corresponds to K72–W95. The helical transmembrane segment at F96–I118 threads the bilayer. At G119 to G125 the chain is on the periplasmic side. A helical membrane pass occupies residues V126–L145. The Cytoplasmic portion of the chain corresponds to Q146–K155. Residues V156–S175 traverse the membrane as a helical segment. The Periplasmic portion of the chain corresponds to Q176–A196. The chain crosses the membrane as a helical span at residues V197–T220. The Cytoplasmic portion of the chain corresponds to Q221–D238. The helical transmembrane segment at V239–A258 threads the bilayer. Residues A259–Y276 are Periplasmic-facing. Residues L277–A297 form a helical membrane-spanning segment. Topologically, residues A298–R327 are cytoplasmic. A helical membrane pass occupies residues R328–D344. At P345–V350 the chain is on the periplasmic side. A helical transmembrane segment spans residues M351–F370. The Cytoplasmic portion of the chain corresponds to T371–K387. The helical transmembrane segment at Q388–V406 threads the bilayer. Residues G407 to S413 lie on the Periplasmic side of the membrane.

Belongs to the NRAMP family.

The protein resides in the cell inner membrane. Functionally, h(+)-stimulated, divalent metal cation uptake system. The chain is Divalent metal cation transporter MntH from Salmonella schwarzengrund (strain CVM19633).